Reading from the N-terminus, the 745-residue chain is Ankyrin repeat and protein kinase domain-containing protein 1 (745 aa).

Positions 34-301 constitute a Protein kinase domain; it reads EEEWHLVASG…NVAVETDMLL (268 aa). ATP is bound by residues 40 to 48 and lysine 63; that span reads VASGGFSKV. Residue aspartate 157 is the Proton acceptor of the active site. ANK repeat units follow at residues 369 to 398, 402 to 431, 435 to 464, 468 to 497, 501 to 530, 534 to 563, 567 to 596, 600 to 629, 633 to 662, 666 to 695, and 699 to 728; these read NRVT…DVDC, SGYT…DTNL, DGWA…LVNA, EGWT…DLSP, EGKT…ELDA, NLRT…LPDA, SGYS…SLEL, QGWT…DLDA, MQWT…NPNA, SGWT…DIHA, and VGWT…QVDV.

Belongs to the protein kinase superfamily. TKL Ser/Thr protein kinase family.

It carries out the reaction L-seryl-[protein] + ATP = O-phospho-L-seryl-[protein] + ADP + H(+). It catalyses the reaction L-threonyl-[protein] + ATP = O-phospho-L-threonyl-[protein] + ADP + H(+). This Mus musculus (Mouse) protein is Ankyrin repeat and protein kinase domain-containing protein 1 (Ankk1).